Consider the following 1041-residue polypeptide: Isoleucine--tRNA ligase (1041 aa).

The short motif at 53-63 (PFANGLPHYGH) is the 'HIGH' region element. A 'KMSKS' region motif is present at residues 619-623 (KMSKS). K622 provides a ligand contact to ATP.

Belongs to the class-I aminoacyl-tRNA synthetase family. IleS type 2 subfamily. Monomer. The cofactor is Zn(2+).

It is found in the cytoplasm. It carries out the reaction tRNA(Ile) + L-isoleucine + ATP = L-isoleucyl-tRNA(Ile) + AMP + diphosphate. In terms of biological role, catalyzes the attachment of isoleucine to tRNA(Ile). As IleRS can inadvertently accommodate and process structurally similar amino acids such as valine, to avoid such errors it has two additional distinct tRNA(Ile)-dependent editing activities. One activity is designated as 'pretransfer' editing and involves the hydrolysis of activated Val-AMP. The other activity is designated 'posttransfer' editing and involves deacylation of mischarged Val-tRNA(Ile). The polypeptide is Isoleucine--tRNA ligase (Mycobacterium bovis (strain ATCC BAA-935 / AF2122/97)).